The primary structure comprises 1367 residues: Paired amphipathic helix protein Sin3-like 2 (1367 aa).

Residues 14 to 44 (QFKRPLGSSRGESYEQSPITGGGSIGEGGIN) form a disordered region. A compositionally biased stretch (gly residues) spans 33–42 (TGGGSIGEGG). PAH domains lie at 46 to 116 (QKLT…LPKG) and 130 to 200 (KTVE…LPDS). The interval 212-322 (SQAQRYDDRG…EAYSGPASHS (111 aa)) is disordered. Basic and acidic residues-rich tracts occupy residues 230–286 (MFME…SRDL) and 299–311 (FSEKRKSSRRMEG). The region spanning 327 to 396 (LKSMYNQAFL…DEFNQFFERC (70 aa)) is the PAH 3 domain. Disordered regions lie at residues 417 to 446 (EENLSRSVKGEEKDREHKRDVEAAKEKERS), 786 to 883 (DVHA…LSKP), 912 to 946 (QSDTSKANSNYDESGGPSKIEKEEGELSPVGDSED), and 958 to 1031 (ATAK…EGME). Composition is skewed to basic and acidic residues over residues 424–446 (VKGEEKDREHKRDVEAAKEKERS) and 806–819 (SSGKENLKDGDLAN). Polar residues-rich tracts occupy residues 851 to 876 (ATSSSSFPSGVENNNGKVGSRDSSGS) and 912 to 923 (QSDTSKANSNYD). Basic and acidic residues predominate over residues 958–967 (ATAKTEHSVE). Composition is skewed to acidic residues over residues 968–989 (AEGENDEDADDEDGDDASEAGE) and 997–1016 (IGDECSQDDNGVEEEGEHDE). Serine 1023 is subject to Phosphoserine.

The protein resides in the nucleus. Functionally, acts as a transcriptional repressor. Plays roles in regulating gene expression and genome stability. The polypeptide is Paired amphipathic helix protein Sin3-like 2 (SNL2) (Arabidopsis thaliana (Mouse-ear cress)).